Reading from the N-terminus, the 323-residue chain is Annexin A3 (323 aa).

Ala2 carries the N-acetylalanine modification. 4 Annexin repeats span residues 18-89 (FNPS…ALVT), 90-161 (PPAV…ILAN), 173-245 (QLAR…AIVR), and 249-320 (NTPA…KICG). Lys177 is modified (N6-acetyllysine). Position 267 is a phosphothreonine (Thr267).

The protein belongs to the annexin family.

Its function is as follows. Inhibitor of phospholipase A2, also possesses anti-coagulant properties. Also cleaves the cyclic bond of inositol 1,2-cyclic phosphate to form inositol 1-phosphate. The protein is Annexin A3 (ANXA3) of Bos taurus (Bovine).